The sequence spans 453 residues: Bifunctional protein GlmU (453 aa).

The tract at residues 1–225 is pyrophosphorylase; it reads MNIVILAAGT…GWETLGVNSK (225 aa). UDP-N-acetyl-alpha-D-glucosamine is bound by residues 6 to 9, Lys20, Gln71, 76 to 77, 98 to 100, Gly135, Glu150, Asn165, and Asn223; these read LAAG, GT, and YGD. Asp100 contributes to the Mg(2+) binding site. Asn223 contacts Mg(2+). Residues 226 to 246 form a linker region; it reads AQLAELERIHQRNLADALLAA. The N-acetyltransferase stretch occupies residues 247-453; the sequence is GVTLADPARI…GYVRPVKKKS (207 aa). UDP-N-acetyl-alpha-D-glucosamine-binding residues include Arg329 and Lys347. The Proton acceptor role is filled by His359. Positions 362 and 373 each coordinate UDP-N-acetyl-alpha-D-glucosamine. Acetyl-CoA-binding positions include Ala376, 382–383, Ser401, and Ala419; that span reads NY.

It in the N-terminal section; belongs to the N-acetylglucosamine-1-phosphate uridyltransferase family. This sequence in the C-terminal section; belongs to the transferase hexapeptide repeat family. Homotrimer. The cofactor is Mg(2+).

It localises to the cytoplasm. It catalyses the reaction alpha-D-glucosamine 1-phosphate + acetyl-CoA = N-acetyl-alpha-D-glucosamine 1-phosphate + CoA + H(+). It carries out the reaction N-acetyl-alpha-D-glucosamine 1-phosphate + UTP + H(+) = UDP-N-acetyl-alpha-D-glucosamine + diphosphate. Its pathway is nucleotide-sugar biosynthesis; UDP-N-acetyl-alpha-D-glucosamine biosynthesis; N-acetyl-alpha-D-glucosamine 1-phosphate from alpha-D-glucosamine 6-phosphate (route II): step 2/2. It functions in the pathway nucleotide-sugar biosynthesis; UDP-N-acetyl-alpha-D-glucosamine biosynthesis; UDP-N-acetyl-alpha-D-glucosamine from N-acetyl-alpha-D-glucosamine 1-phosphate: step 1/1. The protein operates within bacterial outer membrane biogenesis; LPS lipid A biosynthesis. Its function is as follows. Catalyzes the last two sequential reactions in the de novo biosynthetic pathway for UDP-N-acetylglucosamine (UDP-GlcNAc). The C-terminal domain catalyzes the transfer of acetyl group from acetyl coenzyme A to glucosamine-1-phosphate (GlcN-1-P) to produce N-acetylglucosamine-1-phosphate (GlcNAc-1-P), which is converted into UDP-GlcNAc by the transfer of uridine 5-monophosphate (from uridine 5-triphosphate), a reaction catalyzed by the N-terminal domain. The protein is Bifunctional protein GlmU of Burkholderia pseudomallei (strain K96243).